The primary structure comprises 34 residues: Mytilin-B (34 aa).

4 cysteine pairs are disulfide-bonded: C2/C27, C6/C29, C10/C31, and C15/C34.

It is found in the secreted. Has antibacterial and antiviral activity. In Mytilus edulis (Blue mussel), this protein is Mytilin-B.